A 349-amino-acid polypeptide reads, in one-letter code: Isopentenyl-diphosphate delta-isomerase (349 aa).

5-6 (RK) is a substrate binding site. FMN-binding positions include Ser61, 62–64 (SMT), Ser92, and Asn120. 92-94 (SMR) provides a ligand contact to substrate. Gln159 lines the substrate pocket. Residue Glu160 participates in Mg(2+) binding. Residues Lys189, Thr219, 269–271 (GLR), and 290–291 (AR) contribute to the FMN site.

Belongs to the IPP isomerase type 2 family. In terms of assembly, homooctamer. Dimer of tetramers. FMN serves as cofactor. It depends on NADPH as a cofactor. Mg(2+) is required as a cofactor.

The protein localises to the cytoplasm. The catalysed reaction is isopentenyl diphosphate = dimethylallyl diphosphate. In terms of biological role, involved in the biosynthesis of isoprenoids. Catalyzes the 1,3-allylic rearrangement of the homoallylic substrate isopentenyl (IPP) to its allylic isomer, dimethylallyl diphosphate (DMAPP). The protein is Isopentenyl-diphosphate delta-isomerase of Picrophilus torridus (strain ATCC 700027 / DSM 9790 / JCM 10055 / NBRC 100828 / KAW 2/3).